The primary structure comprises 696 residues: MKFLQQNSFTQTSMSQPHEDVSPPLRHPYLTGNFAPIHKTTNLTPCTYSGCIPPELTGGQYVRNGGNPVSHQDLGKDAHWFDGDGMLSGVAFRKASIDGKTIPEFVNQYILTDLYLSRKTTSIASPIMPSITTLVNPLSTMFQIMFATFRTIFLVILSNLPGSQQAIKRISVANTAVLYHDGRALATCESGPPMRIQLPSLDTVGWFDGVEAEGEPEISQAGSDDSPFGGSGIFSFMKEWTTGHPKVDPVTGEMLLYHNTFMPPYVHCSVLPKSNEKAPGHRLVNQPVLGVSGARMMHDFGASRSHTIIMDLPLSLDPLNTMKGKEVVAYDPTKPSRFGVFPRHLPSSVRWFHTAPCCIFHTANTWDSQSSEGELSVNLLACRMTSSTLVYTAGNIRPPVRSRCTQARVWSDEREETACRYKEAPALESPGESTGLADYFPITAESDDYDQCRLYYYEFDLAMESRNHVKSQWALSAIPFEFPSVRPDREMQEARYIYGCSTSTSCFGVALGRADKVDLLVKMDAKTLIQRGKKMNATSITGCVDRRSVCEILQEQRKDDPINIFRLPPNHYAQEPRFVPRACSTEEDDGYLLFYVFDESQLLPSGDCPPSATSELWILDAKNMRDVVAKVRLPQRVPYGLHGTWFSSQDIESQRSVESLRSLEVVQRKKEEWVNSGGQIRKSWMVLREKLEKAVG.

Over residues 1 to 16 the composition is skewed to polar residues; it reads MKFLQQNSFTQTSMSQ. Residues 1–27 are disordered; the sequence is MKFLQQNSFTQTSMSQPHEDVSPPLRH. Positions 244, 298, 361, and 642 each coordinate Fe(2+).

Belongs to the carotenoid oxygenase family. It depends on Fe(2+) as a cofactor.

It carries out the reaction all-trans-beta-carotene + O2 = 2 all-trans-retinal. The protein operates within carotenoid biosynthesis. Functionally, carotenoid dioxygenase; part of the car gene cluster that mediates the biosynthesis of neurosporaxanthin, a carboxylic apocarotenoid acting as an essential protective pigments and leading to orange pigmentation. CarX mediates the cleavage of beta-carotene produced by carAR into retinal, the rhodopsin's chromophore that is involved in the regulation of the carotenoid biosynthetic pathway via a negative feedback mechanism. It can also convert the synthetic compound beta-apo-8'-carotenal but not C35-apocarotenoids such as the acidic apocarotenoid neurosporaxanthin (C35), as well as its corresponding aldehyde beta-apo-4'-carotenal. The chain is Carotenoid dioxygenase carX from Gibberella fujikuroi (strain CBS 195.34 / IMI 58289 / NRRL A-6831) (Bakanae and foot rot disease fungus).